A 251-amino-acid chain; its full sequence is tRNA (guanine-N(1)-)-methyltransferase (251 aa).

S-adenosyl-L-methionine contacts are provided by residues Gly-111 and 131 to 136; that span reads LGDFVL.

The protein belongs to the RNA methyltransferase TrmD family. As to quaternary structure, homodimer.

It is found in the cytoplasm. It carries out the reaction guanosine(37) in tRNA + S-adenosyl-L-methionine = N(1)-methylguanosine(37) in tRNA + S-adenosyl-L-homocysteine + H(+). Its function is as follows. Specifically methylates guanosine-37 in various tRNAs. This Synechococcus sp. (strain JA-2-3B'a(2-13)) (Cyanobacteria bacterium Yellowstone B-Prime) protein is tRNA (guanine-N(1)-)-methyltransferase.